The sequence spans 169 residues: uncharacterized protein (169 aa).

This is an uncharacterized protein from Haemophilus influenzae (strain ATCC 51907 / DSM 11121 / KW20 / Rd).